Reading from the N-terminus, the 483-residue chain is Malonate-semialdehyde dehydrogenase 2 (483 aa).

5 residues coordinate NAD(+): Phe152, Lys176, Glu179, Arg180, and Ser229. Cys284 functions as the Nucleophile in the catalytic mechanism. Glu384 provides a ligand contact to NAD(+).

Belongs to the aldehyde dehydrogenase family. IolA subfamily. As to quaternary structure, homotetramer.

It catalyses the reaction 3-oxopropanoate + NAD(+) + CoA + H2O = hydrogencarbonate + acetyl-CoA + NADH + H(+). The enzyme catalyses 2-methyl-3-oxopropanoate + NAD(+) + CoA + H2O = propanoyl-CoA + hydrogencarbonate + NADH + H(+). It functions in the pathway polyol metabolism; myo-inositol degradation into acetyl-CoA; acetyl-CoA from myo-inositol: step 7/7. Functionally, catalyzes the oxidation of malonate semialdehyde (MSA) and methylmalonate semialdehyde (MMSA) into acetyl-CoA and propanoyl-CoA, respectively. Is involved in a myo-inositol catabolic pathway. Bicarbonate, and not CO2, is the end-product of the enzymatic reaction. This is Malonate-semialdehyde dehydrogenase 2 from Geobacillus thermodenitrificans (strain NG80-2).